The chain runs to 352 residues: Iron-sulfur cluster carrier protein (352 aa).

114-121 serves as a coordination point for ATP; it reads GKGGVGKS.

The protein belongs to the Mrp/NBP35 ATP-binding proteins family. As to quaternary structure, homodimer. Interacts with BrxC.

In terms of biological role, binds and transfers iron-sulfur (Fe-S) clusters to target apoproteins. Can hydrolyze ATP. Functionally, negatively regulates the expression of hpr/scoC. The effect on hpr/scoC may be indirect. This is Iron-sulfur cluster carrier protein (salA) from Bacillus subtilis (strain 168).